Reading from the N-terminus, the 119-residue chain is Endocuticle structural glycoprotein SgAbd-3 (119 aa).

Position 1 is a pyrrolidone carboxylic acid (glutamine 1). Positions 24–98 constitute a Chitin-binding type R&amp;R domain; sequence DGSYRYSFET…PQGAHLPTPP (75 aa). Residues 33–55 form a disordered region; it reads TSDGQRASQEGALKQVSAPGPDG. O-linked (HexNAc...) threonine glycosylation is present at threonine 96.

In terms of biological role, component of the abdominal endocuticle. This is Endocuticle structural glycoprotein SgAbd-3 from Schistocerca gregaria (Desert locust).